A 136-amino-acid chain; its full sequence is Large ribosomal subunit protein uL16c (136 aa).

Belongs to the universal ribosomal protein uL16 family. In terms of assembly, part of the 50S ribosomal subunit.

The protein localises to the plastid. Its subcellular location is the chloroplast. In Mesostigma viride (Green alga), this protein is Large ribosomal subunit protein uL16c.